The sequence spans 429 residues: Glycogenin-1 (429 aa).

UDP-binding residues include Leu8, Thr10, Asn11, Tyr14, and Arg76. Leu8, Thr10, Asn11, Tyr14, Arg76, Lys85, Asp101, Ala102, Asp103, Asn132, Ser133, Asp159, Asp162, and Gln163 together coordinate UDP-alpha-D-glucose. Positions 101, 102, and 103 each coordinate UDP. Mn(2+) is bound at residue Asp101. Asp103 is a binding site for Mn(2+). O-linked (Glc...) tyrosine glycosylation is present at Tyr194. UDP-binding residues include His211, Gly214, and Lys217. Mn(2+) is bound at residue His211. 2 residues coordinate UDP-alpha-D-glucose: Gly214 and Lys217. Disordered stretches follow at residues 254–274 (VFPS…HPKI) and 300–338 (SYDT…QTPH). 2 stretches are compositionally biased toward basic and acidic residues: residues 263–274 (EHRSHSADHPKI) and 309–338 (DSHR…QTPH).

Belongs to the glycosyltransferase 8 family. Glycogenin subfamily. In terms of assembly, forms a heterooctamer with one molecule of gyg-1 bound to each protomer of the gys-1 homotetramer. The N-terminus of gys-1 is involved in interprotomer contacts with gyg-1. The interaction with gys-1 is required for glycogen production but is not required for gys-1 intrinsic activity. Requires Mn(2+) as cofactor. Post-translationally, self-glycosylated by the transfer of glucose residues from UDP-glucose to itself, forming an alpha-1,4-glycan of around 10 residues attached to Tyr-194.

Its subcellular location is the cytoplasm. It is found in the nucleus. It carries out the reaction L-tyrosyl-[glycogenin] + UDP-alpha-D-glucose = alpha-D-glucosyl-L-tyrosyl-[glycogenin] + UDP + H(+). The enzyme catalyses [1,4-alpha-D-glucosyl](n)-L-tyrosyl-[glycogenin] + UDP-alpha-D-glucose = [1,4-alpha-D-glucosyl](n+1)-L-tyrosyl-[glycogenin] + UDP + H(+). Its pathway is glycan biosynthesis; glycogen biosynthesis. Self-glucosylating initiator of glycogen synthesis. It catalyzes the formation of a short alpha (1,4)-glucosyl chain covalently attached via a glucose 1-O-tyrosyl linkage to internal tyrosine residues and these chains act as primers for the elongation reaction catalyzed by glycogen synthase. The protein is Glycogenin-1 of Caenorhabditis elegans.